The chain runs to 376 residues: Flap endonuclease 1 (376 aa).

The interval 1–105 is N-domain; sequence MGIKGLSKLL…GELHKRKENA (105 aa). Mg(2+) is bound at residue aspartate 34. DNA contacts are provided by arginine 47 and arginine 71. Residues aspartate 87, glutamate 159, glutamate 161, aspartate 180, and aspartate 182 each coordinate Mg(2+). The interval 123–254 is I-domain; that stretch reads QAKKLMKRTA…ITAFELIQQY (132 aa). Position 159 (glutamate 159) interacts with DNA. Residues glycine 232 and aspartate 234 each coordinate DNA. Residue aspartate 234 coordinates Mg(2+). The interaction with PCNA stretch occupies residues 336–344; that stretch reads AQGRLDSFF. The interval 354-376 is disordered; that stretch reads SEAASGVKRKKPTTKAKESRKKK. The segment covering 360–376 has biased composition (basic residues); it reads VKRKKPTTKAKESRKKK.

The protein belongs to the XPG/RAD2 endonuclease family. FEN1 subfamily. In terms of assembly, interacts with PCNA. Three molecules of FEN1 bind to one PCNA trimer with each molecule binding to one PCNA monomer. PCNA stimulates the nuclease activity without altering cleavage specificity. Mg(2+) is required as a cofactor. Phosphorylated. Phosphorylation upon DNA damage induces relocalization to the nuclear plasma.

Its subcellular location is the nucleus. The protein resides in the nucleolus. The protein localises to the nucleoplasm. It localises to the mitochondrion. Its function is as follows. Structure-specific nuclease with 5'-flap endonuclease and 5'-3' exonuclease activities involved in DNA replication and repair. During DNA replication, cleaves the 5'-overhanging flap structure that is generated by displacement synthesis when DNA polymerase encounters the 5'-end of a downstream Okazaki fragment. It enters the flap from the 5'-end and then tracks to cleave the flap base, leaving a nick for ligation. Also involved in the long patch base excision repair (LP-BER) pathway, by cleaving within the apurinic/apyrimidinic (AP) site-terminated flap. Acts as a genome stabilization factor that prevents flaps from equilibrating into structures that lead to duplications and deletions. Also possesses 5'-3' exonuclease activity on nicked or gapped double-stranded DNA, and exhibits RNase H activity. Also involved in replication and repair of rDNA and in repairing mitochondrial DNA. The protein is Flap endonuclease 1 of Entamoeba histolytica (strain ATCC 30459 / HM-1:IMSS / ABRM).